Consider the following 925-residue polypeptide: Leucine--tRNA ligase (925 aa).

A 'HIGH' region motif is present at residues 40 to 51 (PYPSGAGLHVGH). The 'KMSKS' region motif lies at 700–704 (KMSKS). ATP is bound at residue Lys703.

The protein belongs to the class-I aminoacyl-tRNA synthetase family.

Its subcellular location is the cytoplasm. It catalyses the reaction tRNA(Leu) + L-leucine + ATP = L-leucyl-tRNA(Leu) + AMP + diphosphate. The protein is Leucine--tRNA ligase of Porphyromonas gingivalis (strain ATCC 33277 / DSM 20709 / CIP 103683 / JCM 12257 / NCTC 11834 / 2561).